An 841-amino-acid polypeptide reads, in one-letter code: Formin-like protein 10 (841 aa).

The N-terminal stretch at 1 to 25 (MDGLCYVIFIIFSLLSCAFSPLSYA) is a signal peptide. A helical membrane pass occupies residues 102–122 (LIPAISAVLAAATLIALAFFF). Disordered regions lie at residues 137–166 (SKSL…QNKL), 254–297 (ISSH…RTVR), and 403–512 (KSSW…SKQR). Over residues 139–152 (SLASDISQSQQQTL) the composition is skewed to polar residues. Over residues 254 to 278 (ISSHSDSPAMSPSAAMSPPMNSTAP) the composition is skewed to low complexity. Polar residues predominate over residues 279–293 (HWSTNQNTHSPSSPE). Positions 426–444 (LPPPQRPPPAMPEPPPLVP) are enriched in pro residues. Residues 469 to 841 (EGTTDRPKPK…KKMEVTSSLA (373 aa)) form the FH2 domain. Over residues 502 to 512 (YNSSNANSKQR) the composition is skewed to polar residues.

The protein belongs to the formin-like family. Class-I subfamily.

The protein localises to the membrane. Functionally, might be involved in the organization and polarity of the actin cytoskeleton. The chain is Formin-like protein 10 (FH10) from Arabidopsis thaliana (Mouse-ear cress).